Reading from the N-terminus, the 495-residue chain is uncharacterized protein (495 aa).

A disordered region spans residues 337–360; that stretch reads STSNRESDCSGNEDDSSNAKYAKK.

This is an uncharacterized protein from Caenorhabditis elegans.